The following is a 338-amino-acid chain: P2Y purinoceptor 14 (338 aa).

The Extracellular portion of the chain corresponds to 1–29 (MNNSTTTDPPNQPCSWNTLITKQIIPVLY). N-linked (GlcNAc...) asparagine glycosylation is found at Asn2 and Asn3. Residues 30–50 (GMVFITGLLLNGISGWIFFYV) form a helical membrane-spanning segment. Over 51-55 (PSSKS) the chain is Cytoplasmic. Residues 56–76 (FIIYLKNIVVADFLMGLTFPF) traverse the membrane as a helical segment. Over 77-96 (KVLGDSGLGPWQVNVFVCRV) the chain is Extracellular. An intrachain disulfide couples Cys94 to Cys172. Residues 97 to 117 (SAVIFYVNMYVSIVFFGLISF) traverse the membrane as a helical segment. Residues 118 to 139 (DRYYKIVKPLLTSIVQSVNYSK) are Cytoplasmic-facing. Residues 140 to 160 (LLSVLVWMLMLLLAVPNIILT) traverse the membrane as a helical segment. At 161-188 (NQGVKEVTKIQCMELKNELGRKWHKASN) the chain is on the extracellular side. A helical transmembrane segment spans residues 189–209 (YIFVSIFWVVFLLLIVFYTAI). Over 210 to 234 (TRKIFKSHLKSRKNSTSVKRKSSRN) the chain is Cytoplasmic. The chain crosses the membrane as a helical span at residues 235–255 (IFSIVLVFVVCFVPYHIARIP). Topologically, residues 256–278 (YTKSQTEGHYSCRTKETLLYAKE) are extracellular. A helical membrane pass occupies residues 279 to 299 (FTLLLSAANVCLDPIIYFFLC). Residues 300 to 338 (QPFREVLNKKLHMSLKVQNDLEVSKTKRENAIHESTDTL) are Cytoplasmic-facing.

The protein belongs to the G-protein coupled receptor 1 family.

The protein localises to the cell membrane. Receptor for UDP-glucose coupled to G-proteins. This chain is P2Y purinoceptor 14 (P2ry14), found in Mus musculus (Mouse).